A 209-amino-acid polypeptide reads, in one-letter code: Flavin prenyltransferase UbiX (209 aa).

FMN is bound by residues 13–15 (GAS), serine 39, 104–107 (STGT), cysteine 116, and arginine 139. Dimethylallyl phosphate-binding residues include tyrosine 169 and arginine 185.

Belongs to the UbiX/PAD1 family.

It catalyses the reaction dimethylallyl phosphate + FMNH2 = prenylated FMNH2 + phosphate. In terms of biological role, flavin prenyltransferase that catalyzes the synthesis of the prenylated FMN cofactor (prenyl-FMN) for 4-hydroxy-3-polyprenylbenzoic acid decarboxylase UbiD. The prenyltransferase is metal-independent and links a dimethylallyl moiety from dimethylallyl monophosphate (DMAP) to the flavin N5 and C6 atoms of FMN. This chain is Flavin prenyltransferase UbiX, found in Pseudomonas aeruginosa (strain ATCC 15692 / DSM 22644 / CIP 104116 / JCM 14847 / LMG 12228 / 1C / PRS 101 / PAO1).